A 388-amino-acid chain; its full sequence is Mannitol-1-phosphate 5-dehydrogenase (388 aa).

5-16 contacts NAD(+); it reads AIQFGGGNIGRG. Residue lysine 213 is part of the active site.

Belongs to the mannitol dehydrogenase family. Monomer.

The enzyme catalyses D-mannitol 1-phosphate + NAD(+) = beta-D-fructose 6-phosphate + NADH + H(+). Functionally, catalyzes the NAD(H)-dependent interconversion of D-fructose 6-phosphate and D-mannitol 1-phosphate in the metabolism of mannitol. Has a strong preference for NADH over NADPH. This Aspergillus niger (strain ATCC MYA-4892 / CBS 513.88 / FGSC A1513) protein is Mannitol-1-phosphate 5-dehydrogenase (mpdA).